The chain runs to 339 residues: Fructose-1,6-bisphosphatase class 1 (339 aa).

Mg(2+) contacts are provided by glutamate 94, aspartate 116, leucine 118, and aspartate 119. Substrate-binding positions include 119–122 (DGSS), asparagine 210, and lysine 276. Residue glutamate 282 participates in Mg(2+) binding.

Belongs to the FBPase class 1 family. Homotetramer. Requires Mg(2+) as cofactor.

The protein localises to the cytoplasm. It carries out the reaction beta-D-fructose 1,6-bisphosphate + H2O = beta-D-fructose 6-phosphate + phosphate. Its pathway is carbohydrate biosynthesis; gluconeogenesis. The chain is Fructose-1,6-bisphosphatase class 1 from Burkholderia ambifaria (strain ATCC BAA-244 / DSM 16087 / CCUG 44356 / LMG 19182 / AMMD) (Burkholderia cepacia (strain AMMD)).